The primary structure comprises 437 residues: Eukaryotic peptide chain release factor subunit 1 (437 aa).

Alanine 2 is modified (N-acetylalanine). The NIKS motif; plays an important role in translational termination signature appears at 61-64; sequence NIKS. Position 63 is a 4-hydroxylysine (lysine 63). Lysine 87 is covalently cross-linked (Glycyl lysine isopeptide (Lys-Gly) (interchain with G-Cter in SUMO2)). Glutamine 185 is modified (N5-methylglutamine). Residue lysine 279 forms a Glycyl lysine isopeptide (Lys-Gly) (interchain with G-Cter in ubiquitin) linkage. Residue threonine 347 is modified to Phosphothreonine. Lysine 404 participates in a covalent cross-link: Glycyl lysine isopeptide (Lys-Gly) (interchain with G-Cter in SUMO2).

This sequence belongs to the eukaryotic release factor 1 family. Component of the eRF1-eRF3-GTP ternary complex, composed of ETF1/ERF1 and eRF3 (GSPT1/ERF3A or GSPT2/ERF3B) and GTP. Component of the transient SURF (SMG1-UPF1-eRF1-eRF3) complex. Interacts with JMJD4. The ETF1-GSPT1 complex interacts with JMJD4. In terms of processing, hydroxylation at Lys-63 by JMJD4 promotes its translational termination efficiency. Post-translationally, methylated at Gln-185 by N6AMT1. Ubiquitinated at Lys-279 via 'Lys-6'-linked polyubiquitin chains by RNF14 and RNF25 in response to ribosome collisions (ribosome stalling), leading to its degradation by the proteasome and rescue of stalled ribosomes.

The protein resides in the cytoplasm. Functionally, component of the eRF1-eRF3-GTP ternary complex, a ternary complex that mediates translation termination in response to the termination codons. The eRF1-eRF3-GTP complex binds to a stop codon in the ribosomal A-site. ETF1/ERF1 is responsible for stop codon recognition and inducing hydrolysis of peptidyl-tRNA. Following GTP hydrolysis, eRF3 (GSPT1/ERF3A or GSPT2/ERF3B) dissociates, permitting ETF1/eRF1 to accommodate fully in the A-site, followed by hydrolysis of peptidyl-tRNA. Component of the transient SURF complex which recruits UPF1 to stalled ribosomes in the context of nonsense-mediated decay (NMD) of mRNAs containing premature stop codons. Required for SHFL-mediated translation termination which inhibits programmed ribosomal frameshifting (-1PRF) of mRNA from viruses and cellular genes. The polypeptide is Eukaryotic peptide chain release factor subunit 1 (ETF1) (Bos taurus (Bovine)).